A 956-amino-acid chain; its full sequence is DNA replication helicase (956 aa).

120-127 (GTAGAGKT) lines the ATP pocket. A disordered region spans residues 658–694 (PINNHVDADSSQGGQSVPVSQRMEHGQEETHDIPCLS). Low complexity predominate over residues 667–678 (SSQGGQSVPVSQ). Residues 679–694 (RMEHGQEETHDIPCLS) are compositionally biased toward basic and acidic residues.

It belongs to the herpesviridae helicase family. In terms of assembly, associates with the primase and the primase-associated factor to form the helicase-primase complex.

It is found in the host nucleus. Functionally, component of the helicase/primase complex. Unwinds the DNA at the replication forks and generates single-stranded DNA for both leading and lagging strand synthesis. The primase synthesizes short RNA primers on the lagging strand that the polymerase elongates using dNTPs. Possesses helicase-like motifs and therefore may act as the helicase subunit of the complex. In Human cytomegalovirus (strain AD169) (HHV-5), this protein is DNA replication helicase.